The primary structure comprises 1173 residues: MDTKEGSPHVWPTSVEHQSNTAQVHFVPDGGSVAQIVYSDDQDRAQQQVVYTADASSFTSVDASEHTLVYIHPVDGSQTLFTDQPQVAYVQQDATTQQVTVLLPAAQSMNAANLAVLSGVSESAQTMSLDPVSQINRASLTVHDHRLPPMEGADSSTTINSLPSPNAHSDGKEDDDDDDDDDDDEEEEDDDGEDSDLDDWEAEPPRPFDPNDLWCEECNNAHPSVCPKHGALHPIPNRPVLTRARASLPLVLYIDRFLGGVYSKRRIPKRTQFGPLEGPLVKKTELKDSYIHLKVALNSPVDSEGAFQEDLWFELSEESLCNWMMFVRPAQNHLEQNLVAYQYGQHIYFTTIKNIEPKQELKVWYAASYAEFVNEKIHDITQEERKVLREQEKNWPCYECNRRFMSSEQLQQHLNSHDEKLDFISRTKPRGRTRTRRKFGPGRRPGRPPKFLRFDISSENREKIDLGTQDLLQFHNKGPHFEDCGHSTLNGLEQSELTLGTSTQGTPNQQQATQLLPPNEISTPVATTSILTAEDMRRAKRIRNAALQHLFIRKSFRPFKCLQCGKAFREKEKLDQHLRFHGRDGNYPLTCDICNKGFISTSSLENHMKFHLDQKTYSCIFCPESFDRLDLLKDHVVVHIIDGCFSCPTCKKRFTDFIQVKKHVRSFHSEKIYQCTECDKAFCRPDKLRLHMLRHSDRKDFLCSTCGKQFKRKDKLREHMQRMHNPEREAKKADRTGRAKAFKPRLASTDYESFMFKCRVCMMGFRRRGMLVNHLSKRHPEMKIDEVPELTLPIIKPNRDYYCQYCEKVYKSASKRKAHILKNHPGAELPPSIRKLRPAGPGEPDPMLSTHTQLTGTIATPPVCCPHCSKQYSSKTKMVQHIRKKHPEFSLLPISVQAPVLGTAPAVLTADGTSGETVVTTDLLTQAMTELSQTLTTEYRTPQGDFQRIQYIPVSQTTGGMQQPQHIQLQVVQVAQAQSPNQSQHSTVDMGQLHESQGYMQHAIQVQHIQVAEPTSGTQSTPQVGGQALSPSSQEAEEVNPSQLQTPASQAQANSAVQHAYLPSGWNSFRGYPSEIQMMALPQGQYVIAEAAVGTPVTPVSSGQVKAVTQTHYVISEGQGVLDMKKSSSLAEEATPNPDHMEQPASNSSQTTQYIITTTTNMNGSSEVHISKP.

Residues 146 to 211 are disordered; that stretch reads RLPPMEGADS…AEPPRPFDPN (66 aa). Over residues 154–167 the composition is skewed to polar residues; the sequence is DSSTTINSLPSPNA. The segment covering 172–202 has biased composition (acidic residues); it reads KEDDDDDDDDDDDEEEEDDDGEDSDLDDWEA. Residues 248–366 form the SET domain; the sequence is LPLVLYIDRF…PKQELKVWYA (119 aa). Residues 267–371 form an N-terminal PR domain; essential for transcriptional activator activity region; that stretch reads IPKRTQFGPL…KVWYAASYAE (105 aa). The C2H2-type 1 zinc-finger motif lies at 395–417; sequence WPCYECNRRFMSSEQLQQHLNSH. Positions 430 to 447 are enriched in basic residues; sequence RGRTRTRRKFGPGRRPGR. The disordered stretch occupies residues 430 to 451; that stretch reads RGRTRTRRKFGPGRRPGRPPKF. 9 C2H2-type zinc fingers span residues 559 to 581, 589 to 611, 617 to 639, 645 to 668, 673 to 695, 701 to 724, 756 to 779, 801 to 824, and 863 to 886; these read FKCL…LRFH, LTCD…MKFH, YSCI…VVVH, FSCP…RSFH, YQCT…MLRH, FLCS…QRMH, FKCR…SKRH, YYCQ…LKNH, and VCCP…RKKH. The interval 926-1153 is C-terminal glutamine-rich region; essential for transcriptional activator activity; it reads QAMTELSQTL…PASNSSQTTQ (228 aa). Disordered regions lie at residues 1014–1056 and 1125–1173; these read PTSG…ANSA and KKSS…ISKP. Residues 1150–1160 are compositionally biased toward low complexity; that stretch reads QTTQYIITTTT. Polar residues predominate over residues 1161-1173; that stretch reads NMNGSSEVHISKP.

The protein belongs to the class V-like SAM-binding methyltransferase superfamily.

The protein resides in the nucleus. Its function is as follows. Transcriptional activator, essential for early embryonic development and survival of embryonic stem cells (ESCs). Supports cell growth and survival during early development by transcriptionally activating the expression of the translation initiation factor EIF3B, to sustain global translation. Activates the transcription of FLNC. The chain is PR domain zinc finger protein 10 (prdm10) from Xenopus tropicalis (Western clawed frog).